The chain runs to 274 residues: MHLCGGNGLLTQTDPKEQQRQLKKQKNRAAAQRSRQKHTDKADALHQQHESLEKDNLALRKEIQSLQAELAWWSRTLHVHERLCPMDCASCSAPGLLGCWDQAEGLLGPGPQGQHGCREQLELFQTPGSCYPAQPLSPGPQPHDSPSLLQCPLPSLSLGPAVVAEPPVQLSPSPLLFASHTGSSLQGSSSKLSALQPSLTAQTAPPQPLELEHPTRGKLGSSPDNPSSALGLARLQSREHKPALSAATWQGLVVDPSPHPLLAFPLLSSAQVHF.

Disordered regions lie at residues M1 to Q47, G128 to C151, and G187 to A229. The bZIP domain maps to E17 to H80. The segment at R20–K41 is basic motif. A compositionally biased stretch (basic and acidic residues) spans K37–Q47. A leucine-zipper region spans residues L45–L66. The span at G187–Q196 shows a compositional bias: low complexity.

Belongs to the bZIP family. In terms of assembly, heterodimer; heterodimerizes with JUN family proteins.

It localises to the nucleus. Functionally, AP-1 family transcription factor that controls the differentiation of lineage-specific cells in the immune system. Following infection, participates in the differentiation of CD8(+) thymic conventional dendritic cells in the immune system. Acts via the formation of a heterodimer with JUN family proteins that recognizes and binds DNA sequence 5'-TGA[CG]TCA-3' and regulates expression of target genes. Selectively suppresses CCN1 transcription and hence blocks the downstream cell proliferation signals produced by CCN1 and inhibits CCN1-induced anchorage-independent growth and invasion in several cancer types, such as breast cancer, malignant glioma and metastatic melanoma. Possibly acts by interfering with AP-1 binding to CCN1 promoter. The polypeptide is Basic leucine zipper transcriptional factor ATF-like 2 (BATF2) (Homo sapiens (Human)).